A 270-amino-acid chain; its full sequence is Undecaprenyl-diphosphatase 2 (270 aa).

Helical transmembrane passes span 1–21 (MDLIQIIVLAIVQGLTEFLPV), 39–59 (QGLAFDVAVHLGTLAAVVWYF), 87–107 (WAVILGTIPAGIAGLLFKGFI), 114–134 (PLVIAWATIGFGLLLWWSDVV), 147–167 (LSWKDILLIGCAQALALIPGT), 190–210 (FSFLLSIPIIVLASGLSTLDL), 221–241 (AMGLGVVLSAISAYLCIHFFL), and 247–267 (VGMLPFVIYRLILGAVLLVLF).

The protein belongs to the UppP family.

The protein localises to the cell inner membrane. It carries out the reaction di-trans,octa-cis-undecaprenyl diphosphate + H2O = di-trans,octa-cis-undecaprenyl phosphate + phosphate + H(+). In terms of biological role, catalyzes the dephosphorylation of undecaprenyl diphosphate (UPP). Confers resistance to bacitracin. This is Undecaprenyl-diphosphatase 2 from Stutzerimonas stutzeri (strain A1501) (Pseudomonas stutzeri).